The following is a 159-amino-acid chain: ATP-dependent Clp protease adapter protein CLPS1, chloroplastic (159 aa).

Residues 1-44 constitute a chloroplast transit peptide; sequence METAICGRLALAPSSLFNSKSGDKHLVSKGPCVNRSILMTLSTS.

This sequence belongs to the ClpS family. Interacts with CLPC1 (via N-terminus) and CLPC2, but not with CLPt1 or CLPT2. Binds to ClpF; this interaction stimulates their association with ClpC. Expressed exclusively in photosynthetic green tissues with high levels in young, developing leaf tissues.

It localises to the plastid. The protein localises to the chloroplast stroma. In terms of biological role, small adapter protein that modulate the activity of CLPC. Involved in plastid biogenesis in particular when chloroplast protein synthesis capacity is a limiting factor. Probably involved in substrate selection for plastid Clp protease system. Recruitment to ClpC chaperones is facilitated by CLPF thus forming a binary adapter for selective substrate recognition and delivery to plastid Clp protease system (CLPC). In Arabidopsis thaliana (Mouse-ear cress), this protein is ATP-dependent Clp protease adapter protein CLPS1, chloroplastic.